The sequence spans 457 residues: Siroheme synthase (457 aa).

The precorrin-2 dehydrogenase /sirohydrochlorin ferrochelatase stretch occupies residues 1 to 204 (MDHLPIFCQL…NDQKAITETT (204 aa)). NAD(+) contacts are provided by residues 22–23 (DV) and 43–44 (LA). Residue Ser-128 is modified to Phosphoserine. The interval 216–457 (GEVVLVGAGP…RDKLNWFSNH (242 aa)) is uroporphyrinogen-III C-methyltransferase. Position 225 (Pro-225) interacts with S-adenosyl-L-methionine. Asp-248 (proton acceptor) is an active-site residue. Residue Lys-270 is the Proton donor of the active site. S-adenosyl-L-methionine contacts are provided by residues 301–303 (GGD), Ile-306, 331–332 (TA), Met-382, and Gly-411.

It in the N-terminal section; belongs to the precorrin-2 dehydrogenase / sirohydrochlorin ferrochelatase family. This sequence in the C-terminal section; belongs to the precorrin methyltransferase family.

It catalyses the reaction uroporphyrinogen III + 2 S-adenosyl-L-methionine = precorrin-2 + 2 S-adenosyl-L-homocysteine + H(+). It carries out the reaction precorrin-2 + NAD(+) = sirohydrochlorin + NADH + 2 H(+). The enzyme catalyses siroheme + 2 H(+) = sirohydrochlorin + Fe(2+). It participates in cofactor biosynthesis; adenosylcobalamin biosynthesis; precorrin-2 from uroporphyrinogen III: step 1/1. It functions in the pathway cofactor biosynthesis; adenosylcobalamin biosynthesis; sirohydrochlorin from precorrin-2: step 1/1. The protein operates within porphyrin-containing compound metabolism; siroheme biosynthesis; precorrin-2 from uroporphyrinogen III: step 1/1. Its pathway is porphyrin-containing compound metabolism; siroheme biosynthesis; siroheme from sirohydrochlorin: step 1/1. It participates in porphyrin-containing compound metabolism; siroheme biosynthesis; sirohydrochlorin from precorrin-2: step 1/1. Its function is as follows. Multifunctional enzyme that catalyzes the SAM-dependent methylations of uroporphyrinogen III at position C-2 and C-7 to form precorrin-2 via precorrin-1. Then it catalyzes the NAD-dependent ring dehydrogenation of precorrin-2 to yield sirohydrochlorin. Finally, it catalyzes the ferrochelation of sirohydrochlorin to yield siroheme. The chain is Siroheme synthase from Escherichia coli O17:K52:H18 (strain UMN026 / ExPEC).